We begin with the raw amino-acid sequence, 149 residues long: Transcription antitermination protein NusB (149 aa).

Belongs to the NusB family.

Functionally, involved in transcription antitermination. Required for transcription of ribosomal RNA (rRNA) genes. Binds specifically to the boxA antiterminator sequence of the ribosomal RNA (rrn) operons. The sequence is that of Transcription antitermination protein NusB from Hahella chejuensis (strain KCTC 2396).